The sequence spans 361 residues: 5-formaminoimidazole-4-carboxamide-1-(beta)-D-ribofuranosyl 5'-monophosphate synthetase (361 aa).

Positions 27 and 94 each coordinate 5-amino-1-(5-phospho-beta-D-ribosyl)imidazole-4-carboxamide. An ATP-grasp domain is found at 116-348 (RAILRWEAER…MGQRIAKEIK (233 aa)). ATP-binding positions include 146–208 (PDDI…ANYC) and glutamate 230. 5-amino-1-(5-phospho-beta-D-ribosyl)imidazole-4-carboxamide is bound at residue asparagine 258. Residues glutamine 297 and glutamate 310 each contribute to the Mg(2+) site.

The protein belongs to the phosphohexose mutase family. Mg(2+) is required as a cofactor. It depends on Mn(2+) as a cofactor.

The enzyme catalyses 5-amino-1-(5-phospho-beta-D-ribosyl)imidazole-4-carboxamide + formate + ATP = 5-formamido-1-(5-phospho-D-ribosyl)imidazole-4-carboxamide + ADP + phosphate. It functions in the pathway purine metabolism; IMP biosynthesis via de novo pathway; 5-formamido-1-(5-phospho-D-ribosyl)imidazole-4-carboxamide from 5-amino-1-(5-phospho-D-ribosyl)imidazole-4-carboxamide (formate route): step 1/1. Catalyzes the ATP- and formate-dependent formylation of 5-aminoimidazole-4-carboxamide-1-beta-d-ribofuranosyl 5'-monophosphate (AICAR) to 5-formaminoimidazole-4-carboxamide-1-beta-d-ribofuranosyl 5'-monophosphate (FAICAR) in the absence of folates. The protein is 5-formaminoimidazole-4-carboxamide-1-(beta)-D-ribofuranosyl 5'-monophosphate synthetase of Methanococcus maripaludis (strain C5 / ATCC BAA-1333).